Here is a 476-residue protein sequence, read N- to C-terminus: Glycogen synthase (476 aa).

Lys15 contributes to the ADP-alpha-D-glucose binding site.

It belongs to the glycosyltransferase 1 family. Bacterial/plant glycogen synthase subfamily.

The catalysed reaction is [(1-&gt;4)-alpha-D-glucosyl](n) + ADP-alpha-D-glucose = [(1-&gt;4)-alpha-D-glucosyl](n+1) + ADP + H(+). Its pathway is glycan biosynthesis; glycogen biosynthesis. Its function is as follows. Synthesizes alpha-1,4-glucan chains using ADP-glucose. This chain is Glycogen synthase, found in Bacillus cereus (strain ATCC 10987 / NRS 248).